Reading from the N-terminus, the 137-residue chain is Large ribosomal subunit protein uL16 (137 aa).

This sequence belongs to the universal ribosomal protein uL16 family. As to quaternary structure, part of the 50S ribosomal subunit.

Binds 23S rRNA and is also seen to make contacts with the A and possibly P site tRNAs. The sequence is that of Large ribosomal subunit protein uL16 from Rhodopseudomonas palustris (strain HaA2).